A 907-amino-acid polypeptide reads, in one-letter code: MIQKVITVNGIEQNLFVDAEALLSDVLRQQLGLTGVKVGCEQGQCGACSVILDGKVVRACVTKMKRVADGAQITTIEGVGQPENLHPLQKAWVLHGGAQCGFCSPGFIVSAKGLLDTNADPSREDVRDWFQKHRNACRCTGYKPLVDAVMDAAAVINGKKPETDLEFKMPADGRIWGSKYPRPTAVAKVTGTLDYGADLGLKMPAGTLHLAMVQAKVSHANIKGIDTSEALTMPGVHSVITHKDVKGKNRITGLITFPTNKGDGWDRPILCDEKVFQYGDCIALVCADSEANARAAAEKVKVDLEELPAYMSGPAAAAEDAIEIHPGTPNVYFEQPIVKGEDTGPIFASADVTVEGDFYVGRQPHMPIEPDVAFAYMGDDGKCYIHSKSIGVHLHLYMIAPGVGLEPDQLVLVANPMGGTFGYKFSPTSEALVAVAAMATGRPVHLRYNYQQQQQYTGKRSPWEMNVKFAAKKDGTLLAMESDWLVDHGPYSEFGDLLTLRGAQFIGAGYNIPNIRGLGRTVATNHVWGSAFRGYGAPQSMFASECLMDMLAEKLGMDPLELRYKNAYRPGDTNPTGQEPEVFSLPDMIDQLRPKYQAALEKAQKESTATHKKGVGISIGVYGSGLDGPDASEAWAELNADGTITVHTAWEDHGQGADIGCVGTAHEALRPMGVAPEKIKFTWPNTATTPNSGPSGGSRQQVMTGNAIRVACENLLKACEKPGGGYYTYDELKAADKPTKITGNWTASGATHCDAVTGLGKPFVVYMYGVFMAEVTVDVATGQTTVDGMTLMADLGSLCNQLATDGQIYGGLAQGIGLALSEDFEDIKKHATLVGAGFPFIKQIPDKLDIVYVNHPRPDGPFGASGVGELPLTSPHAAIINAIKSATGVRIYRLPAYPEKVLEALKA.

Residues 2–79 (IQKVITVNGI…GAQITTIEGV (78 aa)) enclose the 2Fe-2S ferredoxin-type domain. Residues C40, C45, C48, C60, C100, C103, C137, and C139 each contribute to the [2Fe-2S] cluster site. 2 residues coordinate Mo-molybdopterin cytosine dinucleotide: H653 and E869.

The protein belongs to the xanthine dehydrogenase family. In terms of assembly, homodimer. Mo-molybdopterin cytosine dinucleotide serves as cofactor. The cofactor is [2Fe-2S] cluster.

The enzyme catalyses an aldehyde + A + H2O = a carboxylate + AH2 + H(+). This chain is Aldehyde oxidoreductase (mop), found in Megalodesulfovibrio gigas (Desulfovibrio gigas).